Reading from the N-terminus, the 86-residue chain is RNA-binding protein Hfq (86 aa).

A Sm domain is found at 10-71 (DLFLNNARKE…VSTIQPGKYI (62 aa)).

Belongs to the Hfq family. As to quaternary structure, homohexamer.

Its function is as follows. RNA chaperone that binds small regulatory RNA (sRNAs) and mRNAs to facilitate mRNA translational regulation in response to envelope stress, environmental stress and changes in metabolite concentrations. Also binds with high specificity to tRNAs. This Clostridioides difficile (strain 630) (Peptoclostridium difficile) protein is RNA-binding protein Hfq.